A 205-amino-acid polypeptide reads, in one-letter code: Small ribosomal subunit protein uS4 (205 aa).

Positions 1-16 (MSKRESSKYKIDRRMG) are enriched in basic and acidic residues. Residues 1-46 (MSKRESSKYKIDRRMGENIWGRPKSPVNRREYGPGQHGQRRKGKLS) are disordered. The region spanning 94-157 (SRLDAIVYRA…KQLVIVLEAV (64 aa)) is the S4 RNA-binding domain.

It belongs to the universal ribosomal protein uS4 family. In terms of assembly, part of the 30S ribosomal subunit. Contacts protein S5. The interaction surface between S4 and S5 is involved in control of translational fidelity.

Its function is as follows. One of the primary rRNA binding proteins, it binds directly to 16S rRNA where it nucleates assembly of the body of the 30S subunit. In terms of biological role, with S5 and S12 plays an important role in translational accuracy. The sequence is that of Small ribosomal subunit protein uS4 from Rhizobium johnstonii (strain DSM 114642 / LMG 32736 / 3841) (Rhizobium leguminosarum bv. viciae).